The sequence spans 127 residues: Large ribosomal subunit protein bL19 (127 aa).

Belongs to the bacterial ribosomal protein bL19 family.

Its function is as follows. This protein is located at the 30S-50S ribosomal subunit interface and may play a role in the structure and function of the aminoacyl-tRNA binding site. The sequence is that of Large ribosomal subunit protein bL19 from Synechococcus sp. (strain JA-3-3Ab) (Cyanobacteria bacterium Yellowstone A-Prime).